The primary structure comprises 162 residues: Methyl-coenzyme M reductase II operon protein D (162 aa).

As to quaternary structure, MCR is composed of three subunits: alpha, beta, and gamma. The function of protein D is not known.

The polypeptide is Methyl-coenzyme M reductase II operon protein D (mrtD) (Methanothermobacter thermautotrophicus (strain ATCC 29096 / DSM 1053 / JCM 10044 / NBRC 100330 / Delta H) (Methanobacterium thermoautotrophicum)).